The chain runs to 554 residues: Muellerian-inhibiting factor (554 aa).

An N-terminal signal peptide occupies residues 1-24 (MQGPHLSPLVLLLATMGAVLQPEA). The propeptide occupies 25 to 446 (VENLATNTRG…GREGRGRTGR (422 aa)). N-linked (GlcNAc...) asparagine glycans are attached at residues asparagine 62, asparagine 326, and asparagine 410. 3 disulfides stabilise this stretch: cysteine 456/cysteine 520, cysteine 482/cysteine 551, and cysteine 486/cysteine 553.

The protein belongs to the TGF-beta family. Homodimer; disulfide-linked. Preproprotein is proteolytically processed to generate N- and C-terminal cleavage products that homodimerize and associate to form a biologically active non-covalent complex. Binding of the non-covalent complex to AMHRII induces dissociation of the pro-region from the mature C-terminal dimer. The N-terminal portion of the protein, despite having no intrinsic activity, has the role of amplifying the activity of the C-terminus. As to expression, expressed in Sertoli cells of fetal testes, and in testes just after birth, but absent in adult testes. In female, AMH is expressed after birth in the granulosa cells of the follicle.

It is found in the secreted. In terms of biological role, plays an important role in several reproductive functions, including Muellerian duct regression during male fetal sexua,l differentiation and in the adult plays a role in Leydig cell differentiation and function. In female acts as a negative regulator of the primordial to primary follicle transition and decreases FSH sensitivity of growing follicles. Binds to its sole type II receptor, AMHR2 that recruits type I receptors ACVR1 and BMPR1A which subsequently activates the Smad pathway. This chain is Muellerian-inhibiting factor (Amh), found in Mus musculus (Mouse).